The following is a 934-amino-acid chain: MSSDEKGISPAHKTSTPTHRSASSSTSSQRDSRQSIHILERTASSSTEPSVSRQLLEPEPVPLSKEADSWEIIEGLKIGQTNVQKPDKHEGFMLKKRKWPLKGWHKRFFVLDNGMLKYSKAPLDIQKGKVHGSIDVGLSVMSIKKKARRIDLDTEEHIYHLKVKSQDWFDAWVSKLRHHRLYRQNEIVRSPRDASFHIFPSTSTAESSPAANVSVMDGKMQPNSFPWQSPLPCSNSLPATCTTGQSKVAAWLQDSEEMDRCAEDLAHCQSNLVELSKLLQNLEILQRTQSAPNFTDMQANCVDISKKDKRVTRRWRTKSVSKDTKIQLQVPFSATMSPVRLHSSNPNLCADIEFQTPPSHLTDPLESSTDYTKLQEEFCLIAQKVHSLLKSAFNSIAIEKEKLKQMVSEQDHSKGHSTQMARLRQSLSQALNQNAELRSRLNRIHSESIICDQVVSVNIIPSPDEAGEQIHVSLPLSQQVANESRLSMSESVSEFFDAQEVLLSASSSENEASDDESYISDVSDNISEDNTSVADNISRQILNGELTGGAFRNGRRACLPAPCPDTSNINLWNILRNNIGKDLSKVSMPVELNEPLNTLQHLCEEMEYSELLDKASETDDPYERMVLVAAFAVSGYCSTYFRAGSKPFNPVLGETYECIREDKGFRFFSEQVSHHPPISACHCESKNFVFWQDIRWKNKFWGKSMEILPVGTLNVMLPKYGDYYVWNKVTTCIHNILSGRRWIEHYGEVTIRNTKSSVCICKLTFVKVNYWNSNMNEVQGVVIDQEGKAVYRLFGKWHEGLYCGVAPSAKCIWRPGSMPTNYELYYGFTRFAIELNELDPVLKDLLPPTDARFRPDQRFLEEGNLEAAASEKQRVEELQRSRRRYMEENNLEHIPKFFKKVIDANQREAWVSNDTYWELRKDPGFSKVDSPVLW.

The tract at residues Met-1–Pro-62 is disordered. Residue Ser-2 is modified to N-acetylserine. The segment covering Thr-14 to Gln-29 has biased composition (low complexity). The span at Arg-30 to Glu-40 shows a compositional bias: basic and acidic residues. Ser-35 is subject to Phosphoserine. Polar residues predominate over residues Thr-42–Arg-53. Positions Pro-86–Leu-181 constitute a PH domain. A phosphoserine mark is found at Ser-190 and Ser-290.

The protein belongs to the OSBP family. Homodimer. Interacts with OSBPL3. As to expression, expressed in brain and striated muscle (at protein level). Widely expressed. Expressed in skeletal muscle.

The protein resides in the cytoplasm. Its subcellular location is the cytosol. It is found in the endoplasmic reticulum membrane. The protein localises to the nucleus envelope. It localises to the cell membrane. The protein resides in the endosome membrane. Functionally, regulates cellular transport and efflux of cholesterol. Plays a role in phosphatidylinositol-4-phophate (PI4P) turnover at the neuronal membrane. Binds via its PH domain PI4P, phosphatidylinositol-4,5-diphosphate, phosphatidylinositol-3,4,5-triphosphate, and phosphatidic acid. Weakly binds 25-hydroxycholesterol. This chain is Oxysterol-binding protein-related protein 6 (OSBPL6), found in Homo sapiens (Human).